The primary structure comprises 92 residues: C-C motif chemokine 3 (92 aa).

The signal sequence occupies residues 1–23 (MQVSTAALAVLLCTMALCNQFSA). 2 disulfide bridges follow: Cys33/Cys57 and Cys34/Cys73.

This sequence belongs to the intercrine beta (chemokine CC) family. In terms of assembly, self-associates. Also heterodimer of MIP-1-alpha(4-69) and MIP-1-beta(3-69). Interacts with CCR1.

It localises to the secreted. In terms of biological role, monokine with inflammatory and chemokinetic properties. Binds to CCR1, CCR4 and CCR5. One of the major HIV-suppressive factors produced by CD8+ T-cells. Recombinant MIP-1-alpha induces a dose-dependent inhibition of different strains of HIV-1, HIV-2, and simian immunodeficiency virus (SIV). The chain is C-C motif chemokine 3 (CCL3) from Pan troglodytes (Chimpanzee).